A 161-amino-acid polypeptide reads, in one-letter code: 6,7-dimethyl-8-ribityllumazine synthase (161 aa).

5-amino-6-(D-ribitylamino)uracil contacts are provided by residues tryptophan 26, 58–60 (AFE), and 81–83 (VVI). 86-87 (GT) contributes to the (2S)-2-hydroxy-3-oxobutyl phosphate binding site. The active-site Proton donor is the histidine 89. Position 114 (phenylalanine 114) interacts with 5-amino-6-(D-ribitylamino)uracil. (2S)-2-hydroxy-3-oxobutyl phosphate is bound at residue arginine 128.

It belongs to the DMRL synthase family.

It catalyses the reaction (2S)-2-hydroxy-3-oxobutyl phosphate + 5-amino-6-(D-ribitylamino)uracil = 6,7-dimethyl-8-(1-D-ribityl)lumazine + phosphate + 2 H2O + H(+). It functions in the pathway cofactor biosynthesis; riboflavin biosynthesis; riboflavin from 2-hydroxy-3-oxobutyl phosphate and 5-amino-6-(D-ribitylamino)uracil: step 1/2. Functionally, catalyzes the formation of 6,7-dimethyl-8-ribityllumazine by condensation of 5-amino-6-(D-ribitylamino)uracil with 3,4-dihydroxy-2-butanone 4-phosphate. This is the penultimate step in the biosynthesis of riboflavin. This is 6,7-dimethyl-8-ribityllumazine synthase from Nocardioides sp. (strain ATCC BAA-499 / JS614).